The chain runs to 434 residues: MKRNRLSFMNKVLQSSPAVKQPKLGCHSSLSQTHMRAALLDWGNLPHHVVLRIFQYLPLIDRARASSVCRRWNEVFHIPDLWRKFEFELNQSAASYFNSTHPDLIQQIIKKHAAHLQYVSFKVDSSTESAEAACGILSQLVNCSIQTLGLISTAKPSFLNMSKSHFVSALTVLFVNSISLSSIKIEDTPVDDPSLSILVANNSGTLRRLKMSSCPHVSSNGILCVADHCQGLRELALNYYMLSDKLLLALSNETHVNLEHLRIDVMSENAGQIEFHSIKRQSWDALIKHSPGVNVVMYFFLYEEEMETFFKEETPVTHLYFGRSVSKEILGRLGLNCPRLTELVVCANGIQVIDTELICIAEHCKNLTALGLSECEVSCSAFIEFVRLCGRKLTHLSIMEEVLIPDDVYSLGEIHTEVSKYLGRIWFPDVMPLW.

An F-box domain is found at 39 to 85 (LLDWGNLPHHVVLRIFQYLPLIDRARASSVCRRWNEVFHIPDLWRKF). LRR repeat units lie at residues 187–213 (DTPV…KMSS), 214–239 (CPHV…ALNY), 242–265 (LSDK…RIDV), 322–347 (GRSV…VVCA), 349–374 (GIQV…GLSE), and 375–400 (CEVS…SIME).

In terms of assembly, part of the SCF (SKP1-CUL1-F-box) E3 ubiquitin-protein ligase complex SCF(FBXL21) composed of CUL1, SKP1, RBX1 and FBXL21. Interacts with CRY1 and CRY2.

It localises to the cytoplasm. The protein localises to the cytosol. It is found in the nucleus. It participates in protein modification; protein ubiquitination. Its function is as follows. Substrate-recognition component of the SCF(FBXL21) E3 ubiquitin ligase complex involved in circadian rhythm function. Plays a key role in the maintenance of both the speed and the robustness of the circadian clock oscillation. The SCF(FBXL21) complex mainly acts in the cytosol and mediates ubiquitination of CRY proteins (CRY1 and CRY2), leading to CRY proteins stabilization. The SCF(FBXL21) complex counteracts the activity of the SCF(FBXL3) complex and protects CRY proteins from degradation. Involved in the hypothalamic suprachiasmatic nucleus (SCN) clock regulating temporal organization of the daily activities. The chain is F-box/LRR-repeat protein 21 (FBXL21) from Bos taurus (Bovine).